The sequence spans 247 residues: UPF0246 protein LSEI_2080 (247 aa).

This sequence belongs to the UPF0246 family.

The sequence is that of UPF0246 protein LSEI_2080 from Lacticaseibacillus paracasei (strain ATCC 334 / BCRC 17002 / CCUG 31169 / CIP 107868 / KCTC 3260 / NRRL B-441) (Lactobacillus paracasei).